The following is a 168-amino-acid chain: Endoribonuclease YbeY (168 aa).

Zn(2+)-binding residues include histidine 123, histidine 127, and histidine 133.

Belongs to the endoribonuclease YbeY family. The cofactor is Zn(2+).

It localises to the cytoplasm. In terms of biological role, single strand-specific metallo-endoribonuclease involved in late-stage 70S ribosome quality control and in maturation of the 3' terminus of the 16S rRNA. This chain is Endoribonuclease YbeY, found in Francisella tularensis subsp. holarctica (strain LVS).